Reading from the N-terminus, the 208-residue chain is Large ribosomal subunit protein uL3 (208 aa).

Gln150 is modified (N5-methylglutamine).

It belongs to the universal ribosomal protein uL3 family. As to quaternary structure, part of the 50S ribosomal subunit. Forms a cluster with proteins L14 and L19. Post-translationally, methylated by PrmB.

In terms of biological role, one of the primary rRNA binding proteins, it binds directly near the 3'-end of the 23S rRNA, where it nucleates assembly of the 50S subunit. The protein is Large ribosomal subunit protein uL3 of Buchnera aphidicola subsp. Cinara cedri (strain Cc).